The primary structure comprises 517 residues: Light-independent protochlorophyllide reductase subunit B (517 aa).

Asp36 contributes to the [4Fe-4S] cluster binding site. Catalysis depends on Asp285, which acts as the Proton donor. 420 to 421 contacts substrate; the sequence is GL.

Belongs to the ChlB/BchB/BchZ family. As to quaternary structure, protochlorophyllide reductase is composed of three subunits; BchL, BchN and BchB. Forms a heterotetramer of two BchB and two BchN subunits. [4Fe-4S] cluster is required as a cofactor.

It catalyses the reaction chlorophyllide a + oxidized 2[4Fe-4S]-[ferredoxin] + 2 ADP + 2 phosphate = protochlorophyllide a + reduced 2[4Fe-4S]-[ferredoxin] + 2 ATP + 2 H2O. It participates in porphyrin-containing compound metabolism; bacteriochlorophyll biosynthesis (light-independent). Component of the dark-operative protochlorophyllide reductase (DPOR) that uses Mg-ATP and reduced ferredoxin to reduce ring D of protochlorophyllide (Pchlide) to form chlorophyllide a (Chlide). This reaction is light-independent. The NB-protein (BchN-BchB) is the catalytic component of the complex. This is Light-independent protochlorophyllide reductase subunit B from Bradyrhizobium sp. (strain BTAi1 / ATCC BAA-1182).